Reading from the N-terminus, the 317-residue chain is Nuclear distribution protein nudE homolog (317 aa).

Residues 29 to 180 are a coiled coil; it reads TDVKQEYDEF…LKQELNVKSR (152 aa). The segment at 186–205 is disordered; that stretch reads NGTSVPTANDTNTVNSSMNS.

It belongs to the nudE family.

It localises to the cytoplasm. Its subcellular location is the cytoskeleton. The protein resides in the microtubule organizing center. It is found in the centrosome. The protein localises to the spindle. Its function is as follows. Chaperone protein with functions in nuclear localization. Required for centrosome duplication and formation and function of the mitotic spindle. In postmitotic neurons, acts with nudC downstream of dar1 to ensure correct positioning of the nuclei in primary dendrites and as a consequence, is required for determining multipolar neuron morphology. This is Nuclear distribution protein nudE homolog from Drosophila melanogaster (Fruit fly).